Reading from the N-terminus, the 207-residue chain is Probable RNA 2'-phosphotransferase (207 aa).

The protein belongs to the KptA/TPT1 family.

Removes the 2'-phosphate from RNA via an intermediate in which the phosphate is ADP-ribosylated by NAD followed by a presumed transesterification to release the RNA and generate ADP-ribose 1''-2''-cyclic phosphate (APPR&gt;P). May function as an ADP-ribosylase. The polypeptide is Probable RNA 2'-phosphotransferase (Methanosarcina acetivorans (strain ATCC 35395 / DSM 2834 / JCM 12185 / C2A)).